A 179-amino-acid polypeptide reads, in one-letter code: Large ribosomal subunit protein uL5 (179 aa).

The protein belongs to the universal ribosomal protein uL5 family. As to quaternary structure, part of the 50S ribosomal subunit; part of the 5S rRNA/L5/L18/L25 subcomplex. Contacts the 5S rRNA and the P site tRNA. Forms a bridge to the 30S subunit in the 70S ribosome.

This is one of the proteins that bind and probably mediate the attachment of the 5S RNA into the large ribosomal subunit, where it forms part of the central protuberance. In the 70S ribosome it contacts protein S13 of the 30S subunit (bridge B1b), connecting the 2 subunits; this bridge is implicated in subunit movement. Contacts the P site tRNA; the 5S rRNA and some of its associated proteins might help stabilize positioning of ribosome-bound tRNAs. The polypeptide is Large ribosomal subunit protein uL5 (Bacillus licheniformis (strain ATCC 14580 / DSM 13 / JCM 2505 / CCUG 7422 / NBRC 12200 / NCIMB 9375 / NCTC 10341 / NRRL NRS-1264 / Gibson 46)).